Reading from the N-terminus, the 249-residue chain is 2,3-bisphosphoglycerate-dependent phosphoglycerate mutase (249 aa).

Residues 8–15 (RHGESAWN), 21–22 (TG), Arg-60, 87–90 (ERHY), Lys-98, 114–115 (RR), and 183–184 (GN) each bind substrate. His-9 (tele-phosphohistidine intermediate) is an active-site residue. Glu-87 serves as the catalytic Proton donor/acceptor.

It belongs to the phosphoglycerate mutase family. BPG-dependent PGAM subfamily.

The catalysed reaction is (2R)-2-phosphoglycerate = (2R)-3-phosphoglycerate. It participates in carbohydrate degradation; glycolysis; pyruvate from D-glyceraldehyde 3-phosphate: step 3/5. Functionally, catalyzes the interconversion of 2-phosphoglycerate and 3-phosphoglycerate. In Methanosphaerula palustris (strain ATCC BAA-1556 / DSM 19958 / E1-9c), this protein is 2,3-bisphosphoglycerate-dependent phosphoglycerate mutase.